The chain runs to 169 residues: MAAFLLRHVSRHCLRAHLNAQLCIRNAAPLGTTAKEEMERFWKKNTSSNRPLSPHLTIYKWSLPMALSVCHRGSGIALSGGVSLFGLSALLLPGNFESYLMFVKSLCLGPTLIYSAKFVLVFPLMYHSLNGIRHLLWDLGKGLAIPQVWLSGVAVVVLAVLSSGGLAAL.

The N-terminal 29 residues, 1–29 (MAAFLLRHVSRHCLRAHLNAQLCIRNAAP), are a transit peptide targeting the mitochondrion. Topologically, residues 30 to 62 (LGTTAKEEMERFWKKNTSSNRPLSPHLTIYKWS) are mitochondrial matrix. The chain crosses the membrane as a helical span at residues 63 to 92 (LPMALSVCHRGSGIALSGGVSLFGLSALLL). The Mitochondrial intermembrane segment spans residues 93–112 (PGNFESYLMFVKSLCLGPTL). The helical transmembrane segment at 113–137 (IYSAKFVLVFPLMYHSLNGIRHLLW) threads the bilayer. Residue H127 participates in heme b binding. The Mitochondrial matrix segment spans residues 138-144 (DLGKGLA). The chain crosses the membrane as a helical span at residues 145-166 (IPQVWLSGVAVVVLAVLSSGGL). Residues 167 to 169 (AAL) lie on the Mitochondrial intermembrane side of the membrane.

The protein belongs to the cytochrome b560 family. Component of complex II composed of four subunits: the flavoprotein (FP) SDHA, iron-sulfur protein (IP) SDHB, and a cytochrome b560 composed of SDHC and SDHD. Heme b serves as cofactor.

It is found in the mitochondrion inner membrane. Its pathway is carbohydrate metabolism; tricarboxylic acid cycle. Membrane-anchoring subunit of succinate dehydrogenase (SDH) that is involved in complex II of the mitochondrial electron transport chain and is responsible for transferring electrons from succinate to ubiquinone (coenzyme Q). SDH also oxidizes malate to the non-canonical enol form of oxaloacetate, enol-oxaloacetate. Enol-oxaloacetate, which is a potent inhibitor of the succinate dehydrogenase activity, is further isomerized into keto-oxaloacetate. In Mus musculus (Mouse), this protein is Succinate dehydrogenase cytochrome b560 subunit, mitochondrial (Sdhc).